A 235-amino-acid chain; its full sequence is Secreted RxLR effector protein 27 (235 aa).

A signal peptide spans 1-25 (MTNLFTRHTRRSLTALALLSGGVYA). The RxLR-dEER motif lies at 36-60 (RSLRVFVTGGQVLWDYRIHFKGIER).

Belongs to the RxLR effector family.

Its subcellular location is the secreted. The protein localises to the host cytoplasm. It localises to the host nucleus. Its function is as follows. Effector that acts as a broad suppressor of cell death to interrupt plant immunity. Inhibits cell death induced by cell death-inducing proteins, including the PAMP elicitor INF1 from P.infestans. The sequence is that of Secreted RxLR effector protein 27 from Plasmopara viticola (Downy mildew of grapevine).